A 124-amino-acid chain; its full sequence is UPF0231 protein SO_3983 (124 aa).

Belongs to the UPF0231 family.

In Shewanella oneidensis (strain ATCC 700550 / JCM 31522 / CIP 106686 / LMG 19005 / NCIMB 14063 / MR-1), this protein is UPF0231 protein SO_3983.